Reading from the N-terminus, the 131-residue chain is Global transcriptional regulator Spx 2 (131 aa).

A disulfide bridge connects residues Cys10 and Cys13.

This sequence belongs to the ArsC family. Spx subfamily. Interacts with the C-terminal domain of the alpha subunit of the RNAP.

It is found in the cytoplasm. Its function is as follows. Global transcriptional regulator that plays a key role in stress response and exerts either positive or negative regulation of genes. Acts by interacting with the C-terminal domain of the alpha subunit of the RNA polymerase (RNAP). This interaction can enhance binding of RNAP to the promoter region of target genes and stimulate their transcription, or block interaction of RNAP with activator. The sequence is that of Global transcriptional regulator Spx 2 from Bacillus anthracis.